Consider the following 59-residue polypeptide: Lantibiotic lacticin 3147 A1 (59 aa).

A propeptide spanning residues 1-29 is cleaved from the precursor; sequence MNKNEIETQPVTWLEEVSDQNFDEDVFGA. Positions 30-31 form a cross-link, lanthionine (Cys-Ser); the sequence is CS. 2,3-didehydrobutyrine occurs at positions 32 and 34. Ser36 carries the 2,3-didehydroalanine (Ser) modification. Positions 38 to 48 form a cross-link, lanthionine (Ser-Cys); that stretch reads SDYWGNNGAWC. 2 consecutive cross-links (beta-methyllanthionine (Thr-Cys)) follow at residues 49 to 54 and 51 to 58; these read TLTHEC and THECMAWC.

Post-translationally, maturation of lantibiotics involves the enzymatic conversion of Thr, and Ser into dehydrated AA and the formation of thioether bonds with cysteine. This is followed by membrane translocation and cleavage of the modified precursor. In terms of processing, it is not established whether the 2,3-didehydrobutyrines are the E- or Z-isomers. In the NMR model they were assumed to be the Z-isomer.

It is found in the secreted. In terms of biological role, lanthionine-containing peptide antibiotic (lantibiotic) active on Gram-positive bacteria. The bactericidal activity of lantibiotics is based on depolarization of energized bacterial cytoplasmic membranes, initiated by the formation of aqueous transmembrane pores. When present individually lacticin 3147 A1 exhibits strong activity towards L.lactis strain AM2, weak activity towards L.lactis strain HP and no activity towards L.lactis strain IFPL359, but when combined with lacticin 3147 A2 it displays strong activity towards all three strains. The protein is Lantibiotic lacticin 3147 A1 of Lactococcus lactis subsp. lactis (Streptococcus lactis).